The sequence spans 72 residues: MNYLVMISFALLLVIGVESVRDGYFVEPDNCLVYCMPSPEICDRGCKRYGATSGFCKEFSKGENFCWCKGLR.

An N-terminal signal peptide occupies residues 1–19; it reads MNYLVMISFALLLVIGVES. Residues 21-72 enclose the LCN-type CS-alpha/beta domain; that stretch reads RDGYFVEPDNCLVYCMPSPEICDRGCKRYGATSGFCKEFSKGENFCWCKGLR. 3 disulfide bridges follow: cysteine 35/cysteine 56, cysteine 42/cysteine 66, and cysteine 46/cysteine 68. Residue arginine 72 is a propeptide, removed by a carboxypeptidase.

This sequence belongs to the long (3 C-C) scorpion toxin superfamily. In terms of tissue distribution, expressed by the venom gland.

It is found in the secreted. In Androctonus australis (Sahara scorpion), this protein is Probable neurotoxin pcD-996.